Reading from the N-terminus, the 333-residue chain is Calcium uniporter protein, mitochondrial (333 aa).

The transit peptide at 1–22 directs the protein to the mitochondrion; the sequence is MRNGRCLVTPFVTAQRLANLRN. Topologically, residues 23–214 are mitochondrial matrix; that stretch reads TLWNRQQIAF…QECEAHTDRV (192 aa). Residues 180 to 193 adopt a coiled-coil conformation; the sequence is KKLLLQLENAETLL. Residues 195–213 are outer juxtamembrane helix (OJMH); sequence PLHDAKRKIEQECEAHTDR. Residues 215 to 234 form a helical membrane-spanning segment; the sequence is MWAGFAAMGVQTGLFARLTW. The Mitochondrial intermembrane portion of the chain corresponds to 235 to 243; it reads WEYSWDIME. The short motif at 239-247 is the Selectivity filter element; that stretch reads WDIMEPVTY. Glu243 serves as a coordination point for Ca(2+). The chain crosses the membrane as a helical span at residues 244-260; it reads PVTYFATYSTVCATFGY. At 261-333 the chain is on the mitochondrial matrix side; sequence YLYTQQSFEY…SYLSNLEAEK (73 aa). An inner juxtamembrane helix (IJMH) region spans residues 262 to 271; that stretch reads LYTQQSFEYP. Residues 289-316 are a coiled coil; the sequence is QNFDIEKYNRLVTEVDELRNQLKRMRDP.

This sequence belongs to the MCU (TC 1.A.77) family.

It localises to the mitochondrion inner membrane. It catalyses the reaction Ca(2+)(in) = Ca(2+)(out). Its activity is regulated as follows. Inhibited by ruthenium red or its derivative Ru360; possibly by obstructing the pore. Its function is as follows. Mitochondrial inner membrane calcium uniporter that mediates calcium uptake into mitochondria. Constitutes a pore-forming and calcium-conducting subunit. Mitochondrial calcium homeostasis plays key roles in cellular physiology and regulates cell bioenergetics, cytoplasmic calcium signals and activation of cell death pathways. Required for rapid mitochondrial calcium uptake and mitochondrial reactive oxygen species (mtROS) production after wounding. In addition, together with mitochondrial calcium regulator micu-1, required for mitochondrial calcium uptake following axon injury in PLM touch receptor neurons. The sequence is that of Calcium uniporter protein, mitochondrial from Caenorhabditis elegans.